Consider the following 118-residue polypeptide: Beta-2-microglobulin (118 aa).

A signal peptide spans 1–20 (MAPLVALVLLGLLSLSGLDA). In terms of domain architecture, Ig-like C1-type spans 25–112 (PKVQVYSRHP…HVTLDKPKIV (88 aa)). Cysteines 45 and 99 form a disulfide.

It belongs to the beta-2-microglobulin family. In terms of assembly, heterodimer of an alpha chain and a beta chain. Beta-2-microglobulin is the beta-chain of major histocompatibility complex class I molecules.

The protein localises to the secreted. Functionally, component of the class I major histocompatibility complex (MHC). Involved in the presentation of peptide antigens to the immune system. The chain is Beta-2-microglobulin (B2M) from Sus scrofa (Pig).